A 420-amino-acid chain; its full sequence is 3-phosphoshikimate 1-carboxyvinyltransferase (420 aa).

3 residues coordinate 3-phosphoshikimate: K20, S21, and R25. K20 provides a ligand contact to phosphoenolpyruvate. R119 provides a ligand contact to phosphoenolpyruvate. 3-phosphoshikimate is bound by residues S161, S162, Q163, S189, D303, Q326, and K330. Q163 provides a ligand contact to phosphoenolpyruvate. The Proton acceptor role is filled by D303. Residues R334, R375, and K400 each contribute to the phosphoenolpyruvate site.

The protein belongs to the EPSP synthase family. Monomer.

It localises to the cytoplasm. The enzyme catalyses 3-phosphoshikimate + phosphoenolpyruvate = 5-O-(1-carboxyvinyl)-3-phosphoshikimate + phosphate. Its pathway is metabolic intermediate biosynthesis; chorismate biosynthesis; chorismate from D-erythrose 4-phosphate and phosphoenolpyruvate: step 6/7. Functionally, catalyzes the transfer of the enolpyruvyl moiety of phosphoenolpyruvate (PEP) to the 5-hydroxyl of shikimate-3-phosphate (S3P) to produce enolpyruvyl shikimate-3-phosphate and inorganic phosphate. The protein is 3-phosphoshikimate 1-carboxyvinyltransferase of Dehalococcoides mccartyi (strain ATCC BAA-2266 / KCTC 15142 / 195) (Dehalococcoides ethenogenes (strain 195)).